Consider the following 247-residue polypeptide: E3 ubiquitin-protein ligase RNF182 (247 aa).

An RING-type zinc finger spans residues 20–68; sequence CKICYNRYNLKQRKPKVLECCHRVCAKCLYKIIDFGDSPQGVIVCPFCR. 2 helical membrane passes run 184–204 and 211–231; these read VLVWLLGLLYFSSLPLGIYLL and LGVVFVSLVPSSLVILMVYGF.

As to quaternary structure, interacts with ATP6V0C.

The protein localises to the membrane. Its subcellular location is the cytoplasm. It carries out the reaction S-ubiquitinyl-[E2 ubiquitin-conjugating enzyme]-L-cysteine + [acceptor protein]-L-lysine = [E2 ubiquitin-conjugating enzyme]-L-cysteine + N(6)-ubiquitinyl-[acceptor protein]-L-lysine.. It participates in protein modification; protein ubiquitination. Its function is as follows. E3 ubiquitin-protein ligase that mediates the ubiquitination of ATP6V0C and targets it to degradation via the ubiquitin-proteasome pathway. Also plays a role in the inhibition of TLR-triggered innate immune response by mediating 'Lys'-48-linked ubiquitination and subsequent degradation of NF-kappa-B component RELA. The polypeptide is E3 ubiquitin-protein ligase RNF182 (RNF182) (Ailuropoda melanoleuca (Giant panda)).